Reading from the N-terminus, the 165-residue chain is 3-isopropylmalate dehydratase small subunit (165 aa).

This sequence belongs to the LeuD family. LeuD type 2 subfamily. In terms of assembly, heterodimer of LeuC and LeuD.

The catalysed reaction is (2R,3S)-3-isopropylmalate = (2S)-2-isopropylmalate. It functions in the pathway amino-acid biosynthesis; L-leucine biosynthesis; L-leucine from 3-methyl-2-oxobutanoate: step 2/4. Functionally, catalyzes the isomerization between 2-isopropylmalate and 3-isopropylmalate, via the formation of 2-isopropylmaleate. This is 3-isopropylmalate dehydratase small subunit from Saccharolobus islandicus (strain Y.N.15.51 / Yellowstone #2) (Sulfolobus islandicus).